The sequence spans 115 residues: Evasin P1182 (115 aa).

The N-terminal stretch at 1–26 (MALNWSFRVIFVSTMWCALLKFATLG) is a signal peptide. Intrachain disulfides connect Cys-38-Cys-58, Cys-54-Cys-94, Cys-70-Cys-99, and Cys-89-Cys-108. N-linked (GlcNAc...) asparagine glycosylation is found at Asn-45, Asn-72, and Asn-103.

The protein resides in the secreted. In terms of biological role, salivary chemokine-binding protein which binds to host chemokines CCL2, CCL3, CCL4, CCL8 and CCL18. This is Evasin P1182 from Amblyomma maculatum (Gulf Coast tick).